Consider the following 360-residue polypeptide: Photosystem II protein D1 (360 aa).

A run of 3 helical transmembrane segments spans residues 29–46 (YIGWFGVLMIPTLLTATT), 118–133 (HFLLGVASYMGREWEL), and 142–156 (WIFVAFSAPVAAASA). His118 is a chlorophyll a binding site. Tyr126 is a pheophytin a binding site. Asp170 and Glu189 together coordinate [CaMn4O5] cluster. The helical transmembrane segment at 197–218 (FHMAGVAGVFGGSLFSAMHGSL) threads the bilayer. Position 198 (His198) interacts with chlorophyll a. A quinone is bound by residues His215 and 264–265 (SF). A Fe cation-binding site is contributed by His215. His272 serves as a coordination point for Fe cation. Residues 274 to 288 (FLAAWPVVRIWLTAL) form a helical membrane-spanning segment. 4 residues coordinate [CaMn4O5] cluster: His332, Glu333, Asp342, and Ala344. The propeptide occupies 345 to 360 (AGEVLPVAVSAPAVHA).

The protein belongs to the reaction center PufL/M/PsbA/D family. PSII is composed of 1 copy each of membrane proteins PsbA, PsbB, PsbC, PsbD, PsbE, PsbF, PsbH, PsbI, PsbJ, PsbK, PsbL, PsbM, PsbT, PsbX, PsbY, PsbZ, Psb30/Ycf12, at least 3 peripheral proteins of the oxygen-evolving complex and a large number of cofactors. It forms dimeric complexes. The cofactor is The D1/D2 heterodimer binds P680, chlorophylls that are the primary electron donor of PSII, and subsequent electron acceptors. It shares a non-heme iron and each subunit binds pheophytin, quinone, additional chlorophylls, carotenoids and lipids. D1 provides most of the ligands for the Mn4-Ca-O5 cluster of the oxygen-evolving complex (OEC). There is also a Cl(-1) ion associated with D1 and D2, which is required for oxygen evolution. The PSII complex binds additional chlorophylls, carotenoids and specific lipids.. In terms of processing, tyr-161 forms a radical intermediate that is referred to as redox-active TyrZ, YZ or Y-Z. Post-translationally, C-terminally processed by CTPA; processing is essential to allow assembly of the oxygen-evolving complex and thus photosynthetic growth.

It localises to the plastid. It is found in the chloroplast thylakoid membrane. It carries out the reaction 2 a plastoquinone + 4 hnu + 2 H2O = 2 a plastoquinol + O2. In terms of biological role, photosystem II (PSII) is a light-driven water:plastoquinone oxidoreductase that uses light energy to abstract electrons from H(2)O, generating O(2) and a proton gradient subsequently used for ATP formation. It consists of a core antenna complex that captures photons, and an electron transfer chain that converts photonic excitation into a charge separation. The D1/D2 (PsbA/PsbD) reaction center heterodimer binds P680, the primary electron donor of PSII as well as several subsequent electron acceptors. This chain is Photosystem II protein D1, found in Bumilleriopsis filiformis (Yellow-green alga).